The sequence spans 605 residues: ABC transporter E family member 2 (605 aa).

Residues 46–75 (KLAFISEELCIGCGICVKKCPFEAIQIINL) enclose the 4Fe-4S ferredoxin-type domain. 2 consecutive ABC transporter domains span residues 70 to 315 (IQII…FLAG) and 344 to 568 (IQSY…LSHL). ATP contacts are provided by residues 110–117 (GTNGIGKS) and 381–388 (GENGTGKT).

Belongs to the ABC transporter superfamily. ABCE family. As to expression, expressed in roots, stems, leaves, flowers and siliques.

It is found in the membrane. This chain is ABC transporter E family member 2 (ABCE2), found in Arabidopsis thaliana (Mouse-ear cress).